Consider the following 246-residue polypeptide: UDP-N-acetyl-D-mannosaminuronic acid transferase (246 aa).

The protein belongs to the glycosyltransferase 26 family.

It catalyses the reaction UDP-N-acetyl-alpha-D-mannosaminouronate + N-acetyl-alpha-D-glucosaminyl-di-trans,octa-cis-undecaprenyl diphosphate = beta-D-ManNAcA-(1-&gt;4)-alpha-D-GlcNAc-di-trans,octa-cis-undecaprenyl diphosphate + UDP + H(+). It participates in bacterial outer membrane biogenesis; enterobacterial common antigen biosynthesis. Catalyzes the synthesis of Und-PP-GlcNAc-ManNAcA (Lipid II), the second lipid-linked intermediate involved in enterobacterial common antigen (ECA) synthesis. The chain is UDP-N-acetyl-D-mannosaminuronic acid transferase from Citrobacter koseri (strain ATCC BAA-895 / CDC 4225-83 / SGSC4696).